The primary structure comprises 168 residues: UPF0262 protein BBta_0898 (168 aa).

Belongs to the UPF0262 family.

This chain is UPF0262 protein BBta_0898, found in Bradyrhizobium sp. (strain BTAi1 / ATCC BAA-1182).